A 206-amino-acid polypeptide reads, in one-letter code: Glutathione peroxidase 1 (206 aa).

Residue Ser-37 is modified to Phosphoserine. Residue Sec-52 is part of the active site. A non-standard amino acid (selenocysteine) is located at residue Sec-52. N6-acetyllysine; alternate occurs at positions 91, 117, and 151. Lys-91, Lys-117, and Lys-151 each carry N6-succinyllysine; alternate. Phosphoserine occurs at positions 200 and 204.

Belongs to the glutathione peroxidase family. As to quaternary structure, homotetramer. Interacts with MIEN1. During periods of oxidative stress, Sec-52 may react with a superoxide radical, irreversibly lose hydroselenide and be converted to dehydroalanine.

It localises to the cytoplasm. The protein localises to the mitochondrion. It catalyses the reaction 2 glutathione + H2O2 = glutathione disulfide + 2 H2O. The enzyme catalyses a hydroperoxy polyunsaturated fatty acid + 2 glutathione = a hydroxy polyunsaturated fatty acid + glutathione disulfide + H2O. It carries out the reaction tert-butyl hydroperoxide + 2 glutathione = tert-butanol + glutathione disulfide + H2O. The catalysed reaction is cumene hydroperoxide + 2 glutathione = 2-phenylpropan-2-ol + glutathione disulfide + H2O. It catalyses the reaction (13S)-hydroperoxy-(9Z,11E)-octadecadienoate + 2 glutathione = (13S)-hydroxy-(9Z,11E)-octadecadienoate + glutathione disulfide + H2O. The enzyme catalyses (9S)-hydroperoxy-(10E,12Z)-octadecadienoate + 2 glutathione = (9S)-hydroxy-(10E,12Z)-octadecadienoate + glutathione disulfide + H2O. It carries out the reaction (5S)-hydroperoxy-(6E,8Z,11Z,14Z)-eicosatetraenoate + 2 glutathione = (5S)-hydroxy-(6E,8Z,11Z,14Z)-eicosatetraenoate + glutathione disulfide + H2O. The catalysed reaction is (12S)-hydroperoxy-(5Z,8Z,10E,14Z)-eicosatetraenoate + 2 glutathione = (12S)-hydroxy-(5Z,8Z,10E,14Z)-eicosatetraenoate + glutathione disulfide + H2O. It catalyses the reaction (12R)-hydroperoxy-(5Z,8Z,10E,14Z)-eicosatetraenoate + 2 glutathione = (12R)-hydroxy-(5Z,8Z,10E,14Z)-eicosatetraenoate + glutathione disulfide + H2O. The enzyme catalyses (15S)-hydroperoxy-(5Z,8Z,11Z,13E)-eicosatetraenoate + 2 glutathione = (15S)-hydroxy-(5Z,8Z,11Z,13E)-eicosatetraenoate + glutathione disulfide + H2O. It carries out the reaction (5S)-hydroperoxy-(6E,8Z,11Z,14Z,17Z)-eicosapentaenoate + 2 glutathione = (5S)-hydroxy-(6E,8Z,11Z,14Z,17Z)-eicosapentaenoate + glutathione disulfide + H2O. The catalysed reaction is (12S)-hydroperoxy-(5Z,8Z,10E,14Z,17Z)-eicosapentaenoate + 2 glutathione = (12S)-hydroxy-(5Z,8Z,10E,14Z,17Z)-eicosapentaenoate + glutathione disulfide + H2O. It catalyses the reaction (15S)-hydroperoxy-(5Z,8Z,11Z,13E,17Z)-eicosapentaenoate + 2 glutathione = (15S)-hydroxy-(5Z,8Z,11Z,13E,17Z)-eicosapentaenoate + glutathione disulfide + H2O. The enzyme catalyses (15S)-hydroperoxy-(11Z,13E)-eicosadienoate + 2 glutathione = (15S)-hydroxy-(11Z,13E)-eicosadienoate + glutathione disulfide + H2O. It carries out the reaction (17S)-hydroperoxy-(4Z,7Z,10Z,13Z,15E,19Z)-docosahexaenoate + 2 glutathione = (17S)-hydroxy-(4Z,7Z,10Z,13Z,15E,19Z)-docosahexaenoate + glutathione disulfide + H2O. Its function is as follows. Catalyzes the reduction of hydroperoxides in a glutathione-dependent manner thus regulating cellular redox homeostasis. Can reduce small soluble hydroperoxides such as H2O2, cumene hydroperoxide and tert-butyl hydroperoxide, as well as several fatty acid-derived hydroperoxides. In platelets catalyzes the reduction of 12-hydroperoxyeicosatetraenoic acid, the primary product of the arachidonate 12-lipoxygenase pathway. This Sus scrofa (Pig) protein is Glutathione peroxidase 1 (GPX1).